A 357-amino-acid chain; its full sequence is Glycerol-3-phosphate dehydrogenase [NAD(P)+] (357 aa).

4 residues coordinate NADPH: S30, F31, R51, and K124. Sn-glycerol 3-phosphate-binding residues include K124 and G152. Residue A156 coordinates NADPH. Sn-glycerol 3-phosphate contacts are provided by K207, D260, S270, R271, and N272. The active-site Proton acceptor is K207. R271 is a binding site for NADPH. E297 is an NADPH binding site.

Belongs to the NAD-dependent glycerol-3-phosphate dehydrogenase family.

It localises to the cytoplasm. It catalyses the reaction sn-glycerol 3-phosphate + NAD(+) = dihydroxyacetone phosphate + NADH + H(+). The catalysed reaction is sn-glycerol 3-phosphate + NADP(+) = dihydroxyacetone phosphate + NADPH + H(+). It functions in the pathway membrane lipid metabolism; glycerophospholipid metabolism. Catalyzes the reduction of the glycolytic intermediate dihydroxyacetone phosphate (DHAP) to sn-glycerol 3-phosphate (G3P), the key precursor for phospholipid synthesis. The protein is Glycerol-3-phosphate dehydrogenase [NAD(P)+] of Acinetobacter baylyi (strain ATCC 33305 / BD413 / ADP1).